The primary structure comprises 153 residues: Protein E6 (153 aa).

Zinc fingers lie at residues 37 to 73 (CHFC…CIKC) and 110 to 146 (CSEC…CRAC).

It belongs to the papillomaviridae E6 protein family. As to quaternary structure, forms homodimers. Interacts with ubiquitin-protein ligase UBE3A/E6-AP; this interaction stimulates UBE3A ubiquitin activity. Interacts with host BAK1.

It is found in the host cytoplasm. The protein resides in the host nucleus. Functionally, plays a major role in the induction and maintenance of cellular transformation. E6 associates with host UBE3A/E6-AP ubiquitin-protein ligase and modulates its activity. Protects host keratinocytes from apoptosis by mediating the degradation of host BAK1. May also inhibit host immune response. The protein is Protein E6 of Micromys minutus papillomavirus (MmPV).